Here is a 461-residue protein sequence, read N- to C-terminus: GTPase Der (461 aa).

EngA-type G domains are found at residues 2–164 (QSII…NENF) and 197–369 (IKVG…ANFT). GTP-binding positions include 8-15 (GKPNVGKS), 55-59 (DSGGL), 116-119 (NKID), 203-210 (GRVNVGKS), 250-254 (DTAGI), and 314-317 (NKWD). The KH-like domain occupies 370–454 (QKIPTAKLNA…PLIIVSRKKG (85 aa)).

This sequence belongs to the TRAFAC class TrmE-Era-EngA-EngB-Septin-like GTPase superfamily. EngA (Der) GTPase family. Associates with the 50S ribosomal subunit.

GTPase that plays an essential role in the late steps of ribosome biogenesis. The polypeptide is GTPase Der (Campylobacter lari (strain RM2100 / D67 / ATCC BAA-1060)).